Reading from the N-terminus, the 214-residue chain is Rho-related GTP-binding protein RhoJ (214 aa).

Residues Cys-3 and Cys-11 are each lipidated (S-palmitoyl cysteine). Residues 31–36 (AVGKTC), 46–53 (FPEEYVPT), 75–79 (DTAGQ), 133–136 (TQID), and 177–178 (AL) contribute to the GTP site. The Effector region motif lies at 50–58 (YVPTVFDHY). Cys-211 is subject to Cysteine methyl ester. Residue Cys-211 is the site of S-farnesyl cysteine attachment. The propeptide at 212 to 214 (AII) is removed in mature form.

Belongs to the small GTPase superfamily. Rho family. Interacts with the CRIB domains of proteins such as Pak1 and Was/Wasp. Interacts with GLUL. Palmitoylated; regulates localization to the plasma membrane and may be mediated by GLUL. In terms of tissue distribution, highly expressed in heart with moderate levels in lung and liver. Very low levels detected in brain, spleen, skeletal muscle, kidney and testis.

The protein localises to the cell membrane. Plasma membrane-associated small GTPase specifically involved in angiogenesis. Required for endothelial cell migration during vascular development via its interaction with GLUL. Elicits the formation of F-actin-rich structures, thereby regulating endothelial cell migration. The chain is Rho-related GTP-binding protein RhoJ (Rhoj) from Mus musculus (Mouse).